The following is a 481-amino-acid chain: MADKITSRSEDYSQWYIDLVRSAKLADYADVKGCMVIRPNGYAIWEKMQAALDRMFKETGHVNAYFPLFIPESFIAKEAEHIEGFAPECAVVTHGGGQELAEKLYVRPTSETIIWSSYKKWIQSYRDLPLLINQWANVVRWEMRTRLFLRTTEFLWQEGHTAHATHEEAQEEVLRMINVYKTFAEEYMALPVILGKKSDSEKFAGALETFCIEAMMQDGKALQAGTSHDLGQNFAKAFDCKFQTHEKTLEYVWATSWGVSTRLIGALIMAHSDDRGLVLPPRLATRQVVIIPILKGDKESVLHHADNIAAALTKAGISAFVDSSEQNSPGWKFAEYELQGIPLRLELGPRDIKNGMCVVARRDTLEKTEIALDDRLVMSINEILNDIQQDMFDAALRFRQERTVQVNNYDDFKVAVEKGFVIAHWDGTVETEAKIKEETKATIRVLPQEDDYCDTYGINEPGTCIYSGKPSARKVVFAKAY.

This sequence belongs to the class-II aminoacyl-tRNA synthetase family. ProS type 3 subfamily. As to quaternary structure, homodimer.

Its subcellular location is the cytoplasm. The catalysed reaction is tRNA(Pro) + L-proline + ATP = L-prolyl-tRNA(Pro) + AMP + diphosphate. Its function is as follows. Catalyzes the attachment of proline to tRNA(Pro) in a two-step reaction: proline is first activated by ATP to form Pro-AMP and then transferred to the acceptor end of tRNA(Pro). This chain is Proline--tRNA ligase, found in Chlorobium chlorochromatii (strain CaD3).